An 88-amino-acid polypeptide reads, in one-letter code: Small ribosomal subunit protein bS20 (88 aa).

The protein belongs to the bacterial ribosomal protein bS20 family.

In terms of biological role, binds directly to 16S ribosomal RNA. The chain is Small ribosomal subunit protein bS20 from Aromatoleum aromaticum (strain DSM 19018 / LMG 30748 / EbN1) (Azoarcus sp. (strain EbN1)).